The following is a 328-amino-acid chain: Putative GDP-L-fucose synthase 2 (328 aa).

Residue alanine 2 is modified to N-acetylalanine. 26–32 (GHRGLVG) is a binding site for NADP(+). The active-site Proton donor/acceptor is tyrosine 152. Residues lysine 156, 179–182 (PTNL), and histidine 195 contribute to the NADP(+) site. The substrate site is built by arginine 203, tryptophan 218, arginine 225, and aspartate 285.

Belongs to the NAD(P)-dependent epimerase/dehydratase family. Fucose synthase subfamily. Homodimer.

It catalyses the reaction GDP-beta-L-fucose + NADP(+) = GDP-4-dehydro-alpha-D-rhamnose + NADPH + H(+). Its pathway is nucleotide-sugar biosynthesis; GDP-L-fucose biosynthesis via de novo pathway; GDP-L-fucose from GDP-alpha-D-mannose: step 2/2. In terms of biological role, catalyzes the two-step NADP-dependent conversion of GDP-4-dehydro-6-deoxy-D-mannose to GDP-fucose, involving an epimerase and a reductase reaction. In Arabidopsis thaliana (Mouse-ear cress), this protein is Putative GDP-L-fucose synthase 2 (GER2).